The following is a 448-amino-acid chain: Glutamyl-tRNA(Gln) amidotransferase subunit D (448 aa).

Positions 92–423 (SEVKIISTGG…DKIRSLMLTN (332 aa)) constitute an Asparaginase/glutaminase domain. Catalysis depends on residues threonine 102, threonine 178, aspartate 179, and lysine 257.

Belongs to the asparaginase 1 family. GatD subfamily. In terms of assembly, heterodimer of GatD and GatE.

It catalyses the reaction L-glutamyl-tRNA(Gln) + L-glutamine + ATP + H2O = L-glutaminyl-tRNA(Gln) + L-glutamate + ADP + phosphate + H(+). Allows the formation of correctly charged Gln-tRNA(Gln) through the transamidation of misacylated Glu-tRNA(Gln) in organisms which lack glutaminyl-tRNA synthetase. The reaction takes place in the presence of glutamine and ATP through an activated gamma-phospho-Glu-tRNA(Gln). The GatDE system is specific for glutamate and does not act on aspartate. In Sulfurisphaera tokodaii (strain DSM 16993 / JCM 10545 / NBRC 100140 / 7) (Sulfolobus tokodaii), this protein is Glutamyl-tRNA(Gln) amidotransferase subunit D.